Here is a 365-residue protein sequence, read N- to C-terminus: MIKFLSALILLLVTTAAQAERIRDLTSVQGVRQNSLIGYGLVVGLDGTGDQTTQTPFTTQTLNNMLSQLGITVPTGTNMQLKNVAAVMVTASLPPFGRQGQTIDVVVSSMGNAKSLRGGTLLMTPLKGVDSQVYALAQGNILVGGAGASAGGSSVQVNQLNGGRITNGAVIERELPSQFGVGNTLNLQLNDEDFSMAQQIADTINRVRGYGSATALDARTIQVRVPSGNSSQVRFLADIQNMQVNVTPQDAKVVINSRTGSVVMNREVTLDSCAVAQGNLSVTVNRQANVSQPDTPFGGGQTVVTPQTQIDLRQSGGSLQSVRSSARLNNVVRALNALGATPMDLMSILQSMQSAGCLRAKLEII.

The first 19 residues, 1 to 19 (MIKFLSALILLLVTTAAQA), serve as a signal peptide directing secretion.

The protein belongs to the FlgI family. As to quaternary structure, the basal body constitutes a major portion of the flagellar organelle and consists of four rings (L,P,S, and M) mounted on a central rod.

Its subcellular location is the periplasm. The protein resides in the bacterial flagellum basal body. Functionally, assembles around the rod to form the L-ring and probably protects the motor/basal body from shearing forces during rotation. The chain is Flagellar P-ring protein from Shigella boydii serotype 4 (strain Sb227).